The sequence spans 691 residues: tRNA-dihydrouridine(47) synthase [NAD(P)(+)]-like (691 aa).

Ser2 carries the N-acetylserine modification. The interval 55–94 (PPPPSRSVKQNDAADVRAPQSGLVQEKKSKRQLKRERREQ) is disordered. 2 C3H1-type zinc fingers span residues 94 to 125 (QSTI…HDIE) and 138 to 163 (QCPF…HRDI). Positions 259-286 (LETEEVRPMKKAKSEDQKNSKTGDVGGV) are disordered. Residues 262–279 (EEVRPMKKAKSEDQKNSK) show a composition bias toward basic and acidic residues. Residues 344-346 (PLT) and Gln398 each bind FMN. Cys429 acts as the Proton donor in catalysis. Residues Lys468, His498, 531 to 533 (NGD), and 556 to 557 (AR) each bind FMN.

This sequence belongs to the Dus family. Dus3 subfamily. It depends on FMN as a cofactor.

It catalyses the reaction 5,6-dihydrouridine(47) in tRNA + NAD(+) = uridine(47) in tRNA + NADH + H(+). The enzyme catalyses 5,6-dihydrouridine(47) in tRNA + NADP(+) = uridine(47) in tRNA + NADPH + H(+). It carries out the reaction a 5,6-dihydrouridine in mRNA + NAD(+) = a uridine in mRNA + NADH + H(+). The catalysed reaction is a 5,6-dihydrouridine in mRNA + NADP(+) = a uridine in mRNA + NADPH + H(+). Catalyzes the synthesis of dihydrouridine, a modified base found in the D-loop of most tRNAs. Specifically modifies U47 in cytoplasmic tRNAs. Catalyzes the synthesis of dihydrouridine in some mRNAs, thereby affecting their translation. The protein is tRNA-dihydrouridine(47) synthase [NAD(P)(+)]-like of Arabidopsis thaliana (Mouse-ear cress).